Reading from the N-terminus, the 571-residue chain is Proline--tRNA ligase (571 aa).

The protein belongs to the class-II aminoacyl-tRNA synthetase family. ProS type 1 subfamily. As to quaternary structure, homodimer.

It is found in the cytoplasm. It carries out the reaction tRNA(Pro) + L-proline + ATP = L-prolyl-tRNA(Pro) + AMP + diphosphate. Catalyzes the attachment of proline to tRNA(Pro) in a two-step reaction: proline is first activated by ATP to form Pro-AMP and then transferred to the acceptor end of tRNA(Pro). As ProRS can inadvertently accommodate and process non-cognate amino acids such as alanine and cysteine, to avoid such errors it has two additional distinct editing activities against alanine. One activity is designated as 'pretransfer' editing and involves the tRNA(Pro)-independent hydrolysis of activated Ala-AMP. The other activity is designated 'posttransfer' editing and involves deacylation of mischarged Ala-tRNA(Pro). The misacylated Cys-tRNA(Pro) is not edited by ProRS. In Vibrio cholerae serotype O1 (strain ATCC 39541 / Classical Ogawa 395 / O395), this protein is Proline--tRNA ligase.